The sequence spans 185 residues: Alkyl hydroperoxide reductase AhpD (185 aa).

C132 serves as the catalytic Proton donor. C132 and C135 are disulfide-bonded. C135 (cysteine sulfenic acid (-SOH) intermediate) is an active-site residue.

It belongs to the AhpD family.

The enzyme catalyses N(6)-[(R)-dihydrolipoyl]-L-lysyl-[lipoyl-carrier protein] + a hydroperoxide = N(6)-[(R)-lipoyl]-L-lysyl-[lipoyl-carrier protein] + an alcohol + H2O. In terms of biological role, antioxidant protein with alkyl hydroperoxidase activity. Required for the reduction of the AhpC active site cysteine residues and for the regeneration of the AhpC enzyme activity. This is Alkyl hydroperoxide reductase AhpD from Anaeromyxobacter sp. (strain Fw109-5).